We begin with the raw amino-acid sequence, 254 residues long: Low affinity immunoglobulin gamma Fc region receptor III-A (254 aa).

Positions 1-20 (MWQLLLPTALLLLVSAGMRA) are cleaved as a signal peptide. 2 consecutive Ig-like C2-type domains span residues 24-105 (PKAV…LEVH) and 107-189 (GWLL…VNIT). 2 disulfides stabilise this stretch: C47–C89 and C128–C172. A glycan (N-linked (GlcNAc...) asparagine) is linked at N187. The chain crosses the membrane as a helical span at residues 207-229 (YQVSFCLVMVLLFAVDTGLYFSV). A disordered region spans residues 234-254 (PSSTSDWKDHKFKWSKDPQDK). A compositionally biased stretch (basic and acidic residues) spans 239–254 (DWKDHKFKWSKDPQDK).

Forms a heterooligomeric complex with ITAM-containing signaling subunits, either a homodimer of CD247, a homodimer of FCER1G or a heterodimer of CD247 and FCER1G, to form a functional receptor complex. Interacts (via transmembrane domain) with signaling subunits; this interaction is a prerequisite for receptor complex expression on the cell surface and intracellular signal transduction. Binds the Fc region of antigen-complexed IgG with a preference for IgG1 and IgG3 isotypes. Interacts with CD2; this interaction is involved in NK cell activation and cytotoxicity. Interacts with S100A4; this interaction inhibits PKC-dependent phosphorylation of FCGR3A. Glycosylated. Glycosylation plays an inhibitory role in the interaction with IgG1 and IgG2. Post-translationally, undergoes rapid ectodomain shedding upon NK cell stimulation. The soluble form is produced by a proteolytic cleavage mediated by ADAM17. Repeated stimulation causes receptor shedding, a mechanism that allows for increased NK cell motility and detachment from opsonized target cells while avoiding activation-induced NK cell apoptosis. As to expression, lymphocytes and monocytes.

It localises to the cell membrane. Its subcellular location is the secreted. Receptor for the invariable Fc fragment of immunoglobulin gamma (IgG). Optimally activated upon binding of clustered antigen-IgG complexes displayed on cell surfaces, triggers lysis of antibody-coated cells, a process known as antibody-dependent cellular cytotoxicity (ADCC). Does not bind free monomeric IgG, thus avoiding inappropriate effector cell activation in the absence of antigenic trigger. Mediates IgG effector functions on natural killer (NK) cells. Binds antigen-IgG complexes generated upon infection and triggers NK cell-dependent cytokine production and degranulation to limit viral load and propagation. Involved in the generation of memory-like adaptive NK cells capable to produce high amounts of IFNG and to efficiently eliminate virus-infected cells via ADCC. Regulates NK cell survival and proliferation, in particular by preventing NK cell progenitor apoptosis. Fc-binding subunit that associates with CD247 and/or FCER1G adapters to form functional signaling complexes. Following the engagement of antigen-IgG complexes, triggers phosphorylation of immunoreceptor tyrosine-based activation motif (ITAM)-containing adapters with subsequent activation of phosphatidylinositol 3-kinase signaling and sustained elevation of intracellular calcium that ultimately drive NK cell activation. The ITAM-dependent signaling coupled to receptor phosphorylation by PKC mediates robust intracellular calcium flux that leads to production of pro-inflammatory cytokines, whereas in the absence of receptor phosphorylation it mainly activates phosphatidylinositol 3-kinase signaling leading to cell degranulation. Costimulates NK cells and trigger lysis of target cells independently of IgG binding. Mediates the antitumor activities of therapeutic antibodies. Upon ligation on monocytes triggers TNFA-dependent ADCC of IgG-coated tumor cells. Mediates enhanced ADCC in response to afucosylated IgGs. The sequence is that of Low affinity immunoglobulin gamma Fc region receptor III-A (FCGR3A) from Papio anubis (Olive baboon).